The chain runs to 101 residues: Nucleoid-associated protein Acid345_1974 (101 aa).

The protein belongs to the YbaB/EbfC family. As to quaternary structure, homodimer.

It localises to the cytoplasm. It is found in the nucleoid. Its function is as follows. Binds to DNA and alters its conformation. May be involved in regulation of gene expression, nucleoid organization and DNA protection. This is Nucleoid-associated protein Acid345_1974 from Koribacter versatilis (strain Ellin345).